Reading from the N-terminus, the 222-residue chain is Large ribosomal subunit protein uL1 (222 aa).

The protein belongs to the universal ribosomal protein uL1 family. Part of the 50S ribosomal subunit.

Functionally, binds directly to 23S rRNA. Probably involved in E site tRNA release. Its function is as follows. Protein L1 is also a translational repressor protein, it controls the translation of its operon by binding to its mRNA. This is Large ribosomal subunit protein uL1 from Pyrobaculum arsenaticum (strain DSM 13514 / JCM 11321 / PZ6).